A 115-amino-acid chain; its full sequence is UPF0738 protein SSP1780 (115 aa).

This sequence belongs to the UPF0738 family.

This Staphylococcus saprophyticus subsp. saprophyticus (strain ATCC 15305 / DSM 20229 / NCIMB 8711 / NCTC 7292 / S-41) protein is UPF0738 protein SSP1780.